The following is a 955-amino-acid chain: Kinesin-like protein NACK2 (955 aa).

One can recognise a Kinesin motor domain in the interval 36 to 357 (KILVTIRVRP…LCFATSAKEV (322 aa)). 120–127 (GQTSSGKT) contacts ATP. Coiled-coil stretches lie at residues 366 to 443 (VVAE…LKGS) and 566 to 604 (KASL…VMHL).

It belongs to the TRAFAC class myosin-kinesin ATPase superfamily. Kinesin family. KIN-7 subfamily.

The protein localises to the cytoplasm. It localises to the nucleus. Its subcellular location is the cytoskeleton. It is found in the phragmoplast. Functionally, probable plus end-directed motor protein that may function in the NACK-PQR (NPK1-NQK1/MEK1-NRK1) MAP kinase signaling pathway, which is essential for somatic cell cytokinesis, especially for the cell-plate formation and its expansion. May regulate the activity and the localization of NPK1, probably by association through the non-catalytic region of the kinase. The chain is Kinesin-like protein NACK2 (NACK2) from Nicotiana tabacum (Common tobacco).